Reading from the N-terminus, the 269-residue chain is Nuclear egress protein 2 (269 aa).

The Perinuclear space portion of the chain corresponds to 1–247 (MSRRTYVRSE…VWKLALPVAN (247 aa)). Residues 248 to 268 (VTYALFIVIVLVVVLGAVLFW) form a helical membrane-spanning segment. A topological domain (nuclear) is located at residue lysine 269.

It belongs to the herpesviridae NEC2 protein family. In terms of assembly, forms a heterohexameric complex with NEC1. Post-translationally, phosphorylated.

Its subcellular location is the host nucleus inner membrane. Plays an essential role in virion nuclear egress, the first step of virion release from infected cell. Within the host nucleus, NEC1 interacts with the newly formed capsid through the vertexes and directs it to the inner nuclear membrane by associating with NEC2. Induces the budding of the capsid at the inner nuclear membrane as well as its envelopment into the perinuclear space. There, the NEC1/NEC2 complex promotes the fusion of the enveloped capsid with the outer nuclear membrane and the subsequent release of the viral capsid into the cytoplasm where it will reach the secondary budding sites in the host Golgi or trans-Golgi network. This chain is Nuclear egress protein 2, found in Homo sapiens (Human).